The primary structure comprises 445 residues: 3-phosphoshikimate 1-carboxyvinyltransferase (445 aa).

K28, S29, and R33 together coordinate 3-phosphoshikimate. Phosphoenolpyruvate is bound at residue K28. The phosphoenolpyruvate site is built by G101 and R129. S175, Q177, D328, and K355 together coordinate 3-phosphoshikimate. Phosphoenolpyruvate is bound at residue Q177. Residue D328 is the Proton acceptor of the active site. Phosphoenolpyruvate contacts are provided by R359 and R402.

Belongs to the EPSP synthase family. Monomer.

It is found in the cytoplasm. It carries out the reaction 3-phosphoshikimate + phosphoenolpyruvate = 5-O-(1-carboxyvinyl)-3-phosphoshikimate + phosphate. Its pathway is metabolic intermediate biosynthesis; chorismate biosynthesis; chorismate from D-erythrose 4-phosphate and phosphoenolpyruvate: step 6/7. Catalyzes the transfer of the enolpyruvyl moiety of phosphoenolpyruvate (PEP) to the 5-hydroxyl of shikimate-3-phosphate (S3P) to produce enolpyruvyl shikimate-3-phosphate and inorganic phosphate. In Rhodopseudomonas palustris (strain BisA53), this protein is 3-phosphoshikimate 1-carboxyvinyltransferase.